We begin with the raw amino-acid sequence, 474 residues long: Probable glycine dehydrogenase (decarboxylating) subunit 2 (474 aa).

Lys-266 carries the N6-(pyridoxal phosphate)lysine modification.

It belongs to the GcvP family. C-terminal subunit subfamily. In terms of assembly, the glycine cleavage system is composed of four proteins: P, T, L and H. In this organism, the P 'protein' is a heterodimer of two subunits. The cofactor is pyridoxal 5'-phosphate.

The catalysed reaction is N(6)-[(R)-lipoyl]-L-lysyl-[glycine-cleavage complex H protein] + glycine + H(+) = N(6)-[(R)-S(8)-aminomethyldihydrolipoyl]-L-lysyl-[glycine-cleavage complex H protein] + CO2. Its function is as follows. The glycine cleavage system catalyzes the degradation of glycine. The P protein binds the alpha-amino group of glycine through its pyridoxal phosphate cofactor; CO(2) is released and the remaining methylamine moiety is then transferred to the lipoamide cofactor of the H protein. The protein is Probable glycine dehydrogenase (decarboxylating) subunit 2 of Thermus thermophilus (strain ATCC 27634 / DSM 579 / HB8).